The chain runs to 211 residues: Superoxide dismutase [Mn] (211 aa).

Residues H27, H82, D165, and H169 each contribute to the Mn(2+) site.

The protein belongs to the iron/manganese superoxide dismutase family. As to quaternary structure, homodimer. Requires Mn(2+) as cofactor.

It catalyses the reaction 2 superoxide + 2 H(+) = H2O2 + O2. Destroys superoxide anion radicals which are normally produced within the cells and which are toxic to biological systems. This chain is Superoxide dismutase [Mn] (sodA), found in Bordetella pertussis (strain Tohama I / ATCC BAA-589 / NCTC 13251).